The chain runs to 406 residues: Kelch domain-containing protein 2 (406 aa).

Kelch repeat units follow at residues 31-85, 92-136, 148-207, 221-259, 271-311, and 322-359; these read ERSG…NTEG, SGSC…ERID, LGVW…AWSQ, HACA…NELI, HSLT…IQFN, and HTAC…IFSV.

Component of a CRL2(KLHDC2) E3 ubiquitin-protein ligase complex, also named ECS(KLHDC2) complex, composed of CUL2, Elongin BC (ELOB and ELOC), RBX1 and substrate-specific adapter KLHDC2. May form oligomers as a KLHDC2-ELOB-ELOC complex; this interaction is autoinhibitory for the E3 ligase complex as the substrate-binding site of KLHDC2 is blocked in the oligomer. Interacts with CREB3; interaction is direct and specific as it does not interact with CREB1, ATF4, ATF6, JUN, FOS, CEBPA or herpes simplex virus transactivator VP16. In terms of processing, autoubiquitinated by the CRL2(KLHDC2) E3 ligase complex.

Its subcellular location is the nucleus. Its pathway is protein modification; protein ubiquitination. Functionally, substrate-recognition component of a Cul2-RING (CRL2) E3 ubiquitin-protein ligase complex of the DesCEND (destruction via C-end degrons) pathway, which recognizes a C-degron located at the extreme C terminus of target proteins, leading to their ubiquitination and degradation. The C-degron recognized by the DesCEND pathway is usually a motif of less than ten residues and can be present in full-length proteins, truncated proteins or proteolytically cleaved forms. The CRL2(KLHDC2) complex specifically recognizes proteins with a diglycine (Gly-Gly) at the C-terminus, leading to their ubiquitination and degradation. The CRL2(KLHDC2) complex mediates ubiquitination and degradation of truncated SELENOK and SELENOS selenoproteins produced by failed UGA/Sec decoding, which end with a diglycine. The CRL2(KLHDC2) complex also recognizes proteolytically cleaved proteins ending with Gly-Gly, such as the N-terminal fragment of USP1, leading to their degradation. May also act as an indirect repressor of CREB3-mediated transcription by interfering with CREB3-DNA-binding. This chain is Kelch domain-containing protein 2, found in Mus musculus (Mouse).